The following is a 1149-amino-acid chain: MGLQFIYGRAGSGKSFHCLNSIKTKQNKDSNKKLVLIVPEQYTLQAERDLIKVLGTGGILKTEVLSFRRMAYRVLNEVGGITYPHIHPSGKNMIIYRILERLKDQFTIFHKSANCKGFVNTLSTLITELKRYNVRAESFDEVLQGLADDNYLSHKLKEIKLIYSEFDSMLVDRYRDTDDELTLLSSKLEGTEIYAKSEIWIDGFAGFTPQEVEVISKLIQQAENVHITMCTDILFDDVQADLTDVFAAVKKSCKKFVSIAESYGVKILPPVCLNTPNLPRFKDSRELQSLETNYCSYSYRAYQLPTQDIELFESVNIYTEIEECARDIIKQCRDNGMQFKDITVATRNLTGYENLIGVIFEQYNIPCFIDSKTEITNHPLVRMVLSMLEIFTENWSYESVFRYLKSGLTGIDNTKIDILENYVLACGIRGSRWTQEADWNTSIEFRPDDGQKPENDEMLLNINKTRNEIREPLIRFRNRTKGRRTAGDFCAGIYEYLVEIGVEQRIRNYIEKFTQSGQLRLAGEYQQVWNILMDVFDQAVEVMADETFGLEKFANVFKIGLAEYKISSIPASLDQVLVGSIEHIRSHEIKALYILGTNDGVFPSAGMSEGVLSDADREVLDKRGIELASDTKTRAFDEQYLIYRTLTTPKNYLRLSWPIADHEGRTMRPSTIISRMRKIFPKVTEKSNIVKPSADKQHIDLIASPIPAFNQLVCALRQKNEGIEQGEIWREIFAWFSGQDEWKQKCDAMINALKYRNIAAPVDKSKIRELYGKSPYFTVSRLEKYTSCPFAFYVQYGLGARERKIYRMSPPDVGTFMHAVIERFSKMVDENNYSWREFDRQWCSEQVSKIVDELLDSMKNTILGGSKRFKALAVRLKRVVTRAVWLITEHIRRSSFEPVGYEVDFGDGGAYPPMVIELDSGEKIRLVGRIDRIDALRAENGTYLRIVDYKSGEKDFKLSDVYYGLQMQLITYLDALWEYSDKSNGEKIIPGGILYFRIDDPMIRCTDNSTPEEIETAIMKKLKMKGLLLADVQLIKYMDNTIEGNSIIIPARINKGDVLGKSSAATIEQFTVLRSYVKQLLKDMCSELMKGNVPISPYKKKKLTSCSYCNYSSVCQFDQSQKENSFRMLHDREDNDIWKLMNEIDVKDN.

8–15 is an ATP binding site; that stretch reads GRAGSGKS. The [4Fe-4S] cluster site is built by Cys788, Cys1106, Cys1109, and Cys1115.

It belongs to the helicase family. AddB/RexB type 1 subfamily. In terms of assembly, heterodimer of AddA and AddB. Mg(2+) is required as a cofactor. Requires [4Fe-4S] cluster as cofactor.

Its function is as follows. The heterodimer acts as both an ATP-dependent DNA helicase and an ATP-dependent, dual-direction single-stranded exonuclease. Recognizes the chi site generating a DNA molecule suitable for the initiation of homologous recombination. The AddB subunit has 5' -&gt; 3' nuclease activity but not helicase activity. This is ATP-dependent helicase/deoxyribonuclease subunit B from Ruminiclostridium cellulolyticum (strain ATCC 35319 / DSM 5812 / JCM 6584 / H10) (Clostridium cellulolyticum).